Consider the following 209-residue polypeptide: Uracil phosphoribosyltransferase (209 aa).

5-phospho-alpha-D-ribose 1-diphosphate-binding positions include Arg-79, Arg-104, and 131–139 (DPMLATGGS). Uracil contacts are provided by residues Ile-194 and 199–201 (GDA). Residue Asp-200 participates in 5-phospho-alpha-D-ribose 1-diphosphate binding.

It belongs to the UPRTase family. It depends on Mg(2+) as a cofactor.

The enzyme catalyses UMP + diphosphate = 5-phospho-alpha-D-ribose 1-diphosphate + uracil. It participates in pyrimidine metabolism; UMP biosynthesis via salvage pathway; UMP from uracil: step 1/1. Its activity is regulated as follows. Allosterically activated by GTP. Catalyzes the conversion of uracil and 5-phospho-alpha-D-ribose 1-diphosphate (PRPP) to UMP and diphosphate. The polypeptide is Uracil phosphoribosyltransferase (Lacticaseibacillus paracasei (strain ATCC 334 / BCRC 17002 / CCUG 31169 / CIP 107868 / KCTC 3260 / NRRL B-441) (Lactobacillus paracasei)).